Consider the following 283-residue polypeptide: Release factor glutamine methyltransferase (283 aa).

S-adenosyl-L-methionine-binding positions include 121-125 (GTGSG), Asp144, and Asn188. 188-191 (NPPY) contributes to the substrate binding site.

Belongs to the protein N5-glutamine methyltransferase family. PrmC subfamily.

It carries out the reaction L-glutaminyl-[peptide chain release factor] + S-adenosyl-L-methionine = N(5)-methyl-L-glutaminyl-[peptide chain release factor] + S-adenosyl-L-homocysteine + H(+). Its function is as follows. Methylates the class 1 translation termination release factors RF1/PrfA and RF2/PrfB on the glutamine residue of the universally conserved GGQ motif. The polypeptide is Release factor glutamine methyltransferase (Bacillus anthracis).